Reading from the N-terminus, the 504-residue chain is Arabinose import ATP-binding protein AraG (504 aa).

2 consecutive ABC transporter domains span residues 8–243 and 256–499; these read LSFR…MVGR and YGEE…MPKV. 40–47 provides a ligand contact to ATP; it reads GENGAGKS.

The protein belongs to the ABC transporter superfamily. Arabinose importer (TC 3.A.1.2.2) family. As to quaternary structure, the complex is composed of two ATP-binding proteins (AraG), two transmembrane proteins (AraH) and a solute-binding protein (AraF).

It localises to the cell inner membrane. It catalyses the reaction L-arabinose(out) + ATP + H2O = L-arabinose(in) + ADP + phosphate + H(+). Part of the ABC transporter complex AraFGH involved in arabinose import. Responsible for energy coupling to the transport system. In Escherichia coli (strain UTI89 / UPEC), this protein is Arabinose import ATP-binding protein AraG.